The chain runs to 177 residues: Preprotein translocase subunit SECE1 (177 aa).

The N-terminal 38 residues, 1–38 (MSLTAQFSPPVTGITRSLRDTKPSLSNLRVFPVYTEIR), are a transit peptide targeting the chloroplast. Residues 60-87 (RDTAGSESESEATPSPAEESGSGEDKEV) form a disordered region. Positions 64–79 (GSESESEATPSPAEES) are enriched in low complexity. The helical transmembrane segment at 140 to 160 (VVLGVIAGSSVVLLTVNFLLA) threads the bilayer.

This sequence belongs to the SecE/SEC61-gamma family. As to quaternary structure, part of the Sec protein translocation apparatus. Interacts with SCY1 and ALB3.

It is found in the plastid. The protein localises to the chloroplast thylakoid membrane. Functionally, involved in the import/insertion pathway in the thylakoids. The signal recognition particle is not involved in the insertion of SECE1 in the thylakoid membrane. In Arabidopsis thaliana (Mouse-ear cress), this protein is Preprotein translocase subunit SECE1 (SECE1).